The following is a 544-amino-acid chain: Chaperonin GroEL (544 aa).

ATP is bound by residues 30-33 (TLGP), K51, 87-91 (DGTTT), G415, 479-481 (NAA), and D495.

It belongs to the chaperonin (HSP60) family. As to quaternary structure, forms a cylinder of 14 subunits composed of two heptameric rings stacked back-to-back. Interacts with the co-chaperonin GroES.

It localises to the cytoplasm. The catalysed reaction is ATP + H2O + a folded polypeptide = ADP + phosphate + an unfolded polypeptide.. Functionally, together with its co-chaperonin GroES, plays an essential role in assisting protein folding. The GroEL-GroES system forms a nano-cage that allows encapsulation of the non-native substrate proteins and provides a physical environment optimized to promote and accelerate protein folding. This chain is Chaperonin GroEL, found in Acinetobacter baumannii (strain AB307-0294).